The following is a 1492-amino-acid chain: MIFSQGASPLKGDFSKIKFSIASPESILAHSRGEVLKPETINYRTFKPERDGLMCEKIFGPTKDWECYCGKYKRVRYKGIICDRCGVEVTTKSVRRERMGHISLAVPVVHTWFFRSVPSKIGALLDLSTKELERIIYYEVYVVINPGEPGAKQGIKKLDRLTEEQYFQIITEYEDNQDLDDHDSDKFVAKMGGEAIRLLLKSIDLNETAIHLRKVLKESSSEQKRADALKRLKVVEAFRKSYEPQKKTRKKAVGLFPEDELPEPYVFEGNKPEYMVMEVVPVIPPELRPLVPLEGGRFATSDLNDLYRRVIIRNNRLKKLIDIRAPEVILRNEKRMLQEAVDALFDNSRKANAVKTGESNRPLKSLSDALKGKQGRFRQNLLGKRVDYSGRSVIVVGPELKLHECGLPKSMAIELFQPFVIRRLVERGIAKSVKSAKKLIDKKDQVVWDVLEKVIDGRPVLLNRAPTLHRLGIQAFQPVLIEGKAIQIHPLVCTAFNADFDGDQMAVHVPLSQEAQLEAALLMLSSHNLILPQSGKPVTVPSQDMVLGMYYLTKSRPGDPGEGRIFYSDEDVLIAYNEDRIGLHAQIFVHFNGAVDQKFDPLRVLDTIVDPKSEKYTWLKSQLEKKTILLTTVGRVIFNQNVPDSIGFINRVIDKKVAKELIGRLSSDVGNVETAKFLDNIKEVGFHYAMKGGLSVGLSDAIVPDTKVRHIKNAQKDSTKVVKEYNRGTLTDNERYNQIVDVWQKTSNIVAEESYQKLKKDREGFNPLYMMLDSGARGSREQVRQLTGMRGLIARPQKSMSGQPGEIIENPIISNLKEGLTVLEYFISTHGARKGLSDTSLKTADAGYLTRRLHDVAQDVIVTIEDCGTTRGLHVYRNIEEETSGQIKFREKIRGRVAARDIYDTLNNNVIVKAGEIITEELGDLIQETAGVEEAEIRSVLTCESKIGICSKCYGTNLSVHQIVEIGEAVGVIAAQSIGEPGTQLTLRTFHQGGTAQGGISETETKAFYEGQLEFEDLKTVEHSAITEDGVEEIRIIVVQKNGKINIVDPDSGKILKRYVVPHGAHLHCNAKALVKKDQVLFSSEPNSTQIIAELHGRVKFADIEKGVTYKEEVDPQTGFAQHTIINWRSKLRANETREPRVLIIDESGEVRKNYPVPIKSNLYVEDGQKIVPGDIIAKVPRNLDRAGGDITAGLPKVTELFEARIPSDPAIVSEIDGYVSFGSQRRSSKEIKVKNDFGEEKVYYVQVGKHVLANEGDEVKAGDAMTDGAVSPQDILRIQGPNAVQQYLVNEIQKVYQINAGVEINDKHLEVIVRQMLQKVRVEEPGDTELLPGDLIDRSAFVEANNNVAEKVRVTEKGDAPSRIQEGQLYKTRDITKLNRELRKNSKNLVAFEPALQATSHPVLLGITSAALQTESVISAASFQETTKVLTDAAVAGKIDYLAGLKENVIVGKLIPAGTGLKRYRNLTLTGESVETISHDASDDASTQNGI.

Residues Cys-67, Cys-69, Cys-82, and Cys-85 each contribute to the Zn(2+) site. Mg(2+)-binding residues include Asp-499, Asp-501, and Asp-503. Zn(2+) contacts are provided by Cys-867, Cys-943, Cys-950, and Cys-953.

This sequence belongs to the RNA polymerase beta' chain family. In terms of assembly, the RNAP catalytic core consists of 2 alpha, 1 beta, 1 beta' and 1 omega subunit. When a sigma factor is associated with the core the holoenzyme is formed, which can initiate transcription. It depends on Mg(2+) as a cofactor. The cofactor is Zn(2+).

It catalyses the reaction RNA(n) + a ribonucleoside 5'-triphosphate = RNA(n+1) + diphosphate. Its function is as follows. DNA-dependent RNA polymerase catalyzes the transcription of DNA into RNA using the four ribonucleoside triphosphates as substrates. This chain is DNA-directed RNA polymerase subunit beta', found in Chlorobium phaeobacteroides (strain DSM 266 / SMG 266 / 2430).